Here is a 1268-residue protein sequence, read N- to C-terminus: Meiosis inhibitor protein 1 (1268 aa).

In terms of tissue distribution, strongly expressed in testis, weakly in brain, and not detected in spleen, liver, kidney, small intestine or colon.

Functionally, required for normal meiotic chromosome synapsis. May be involved in the formation of meiotic double-strand breaks (DSBs) in spermatocytes. The chain is Meiosis inhibitor protein 1 from Mus musculus (Mouse).